The following is a 342-amino-acid chain: Cathepsin B-like cysteine proteinase (342 aa).

An N-terminal signal peptide occupies residues 1-17 (MLKIAVYIVSLFTFLEA). Residues 18–89 (HVTTRNNQRI…TVDHHDLNVE (72 aa)) constitute a propeptide, activation peptide. Cystine bridges form between Cys103–Cys132, Cys115–Cys159, Cys151–Cys217, Cys152–Cys155, Cys188–Cys221, and Cys196–Cys207. Residue Cys118 is part of the active site. Catalysis depends on residues His288 and Asn308.

The protein belongs to the peptidase C1 family. Intestine (gut).

Its function is as follows. Thiol protease. Has a role as a digestive enzyme. The polypeptide is Cathepsin B-like cysteine proteinase (CATB) (Schistosoma japonicum (Blood fluke)).